A 159-amino-acid chain; its full sequence is Ribosomal RNA large subunit methyltransferase H (159 aa).

Residues Leu76, Gly108, and 127–132 (FGRLTL) contribute to the S-adenosyl-L-methionine site.

It belongs to the RNA methyltransferase RlmH family. Homodimer.

It localises to the cytoplasm. It carries out the reaction pseudouridine(1915) in 23S rRNA + S-adenosyl-L-methionine = N(3)-methylpseudouridine(1915) in 23S rRNA + S-adenosyl-L-homocysteine + H(+). In terms of biological role, specifically methylates the pseudouridine at position 1915 (m3Psi1915) in 23S rRNA. This is Ribosomal RNA large subunit methyltransferase H from Listeria welshimeri serovar 6b (strain ATCC 35897 / DSM 20650 / CCUG 15529 / CIP 8149 / NCTC 11857 / SLCC 5334 / V8).